The primary structure comprises 338 residues: Ketol-acid reductoisomerase (NADP(+)) (338 aa).

The region spanning 1–181 (MNVFYDKDAD…GGGRAGIIET (181 aa)) is the KARI N-terminal Rossmann domain. NADP(+)-binding positions include 24 to 27 (YGSQ), R47, and S52. H107 is an active-site residue. G133 contacts NADP(+). Residues 182-327 (NFREETETDL…AKLRAMMPWI (146 aa)) enclose the KARI C-terminal knotted domain. D190, E194, E226, and E230 together coordinate Mg(2+). A substrate-binding site is contributed by S251.

The protein belongs to the ketol-acid reductoisomerase family. Requires Mg(2+) as cofactor.

The catalysed reaction is (2R)-2,3-dihydroxy-3-methylbutanoate + NADP(+) = (2S)-2-acetolactate + NADPH + H(+). It carries out the reaction (2R,3R)-2,3-dihydroxy-3-methylpentanoate + NADP(+) = (S)-2-ethyl-2-hydroxy-3-oxobutanoate + NADPH + H(+). Its pathway is amino-acid biosynthesis; L-isoleucine biosynthesis; L-isoleucine from 2-oxobutanoate: step 2/4. The protein operates within amino-acid biosynthesis; L-valine biosynthesis; L-valine from pyruvate: step 2/4. Involved in the biosynthesis of branched-chain amino acids (BCAA). Catalyzes an alkyl-migration followed by a ketol-acid reduction of (S)-2-acetolactate (S2AL) to yield (R)-2,3-dihydroxy-isovalerate. In the isomerase reaction, S2AL is rearranged via a Mg-dependent methyl migration to produce 3-hydroxy-3-methyl-2-ketobutyrate (HMKB). In the reductase reaction, this 2-ketoacid undergoes a metal-dependent reduction by NADPH to yield (R)-2,3-dihydroxy-isovalerate. The sequence is that of Ketol-acid reductoisomerase (NADP(+)) from Burkholderia ambifaria (strain MC40-6).